The chain runs to 562 residues: Scaffold protein FimL (562 aa).

In terms of assembly, interacts with PilG and FimV.

It localises to the cytoplasm. In terms of biological role, regulates multiple virulence functions including type IV pilus (T4P)-mediated assembly and twitching motility as well as cAMP-dependent virulence gene expression. Regulates intracellular cyclic AMP (cAMP) levels through the activation of adenylate cyclase CyaB. Also functions as a scaffold linking FimV and PilG at the pole, where type IV pilus (T4P), the Chp chemosensory system and the CyaB adenylate cyclase interact. This Pseudomonas aeruginosa (strain ATCC 15692 / DSM 22644 / CIP 104116 / JCM 14847 / LMG 12228 / 1C / PRS 101 / PAO1) protein is Scaffold protein FimL (fimL).